Here is a 228-residue protein sequence, read N- to C-terminus: tRNA (guanine-N(1)-)-methyltransferase (228 aa).

S-adenosyl-L-methionine-binding positions include Gly-108 and 127-132; that span reads VGDFIL.

This sequence belongs to the RNA methyltransferase TrmD family. As to quaternary structure, homodimer.

Its subcellular location is the cytoplasm. It carries out the reaction guanosine(37) in tRNA + S-adenosyl-L-methionine = N(1)-methylguanosine(37) in tRNA + S-adenosyl-L-homocysteine + H(+). Specifically methylates guanosine-37 in various tRNAs. The protein is tRNA (guanine-N(1)-)-methyltransferase of Metamycoplasma arthritidis (strain 158L3-1) (Mycoplasma arthritidis).